The following is a 376-amino-acid chain: Erythronate-4-phosphate dehydrogenase (376 aa).

Substrate-binding residues include serine 45 and threonine 67. Aspartate 147 contributes to the NAD(+) binding site. Residue arginine 209 is part of the active site. Residue aspartate 233 coordinates NAD(+). Residue glutamate 238 is part of the active site. Histidine 255 acts as the Proton donor in catalysis. An NAD(+)-binding site is contributed by glycine 258. Substrate is bound at residue tyrosine 259.

It belongs to the D-isomer specific 2-hydroxyacid dehydrogenase family. PdxB subfamily. Homodimer.

It is found in the cytoplasm. It carries out the reaction 4-phospho-D-erythronate + NAD(+) = (R)-3-hydroxy-2-oxo-4-phosphooxybutanoate + NADH + H(+). Its pathway is cofactor biosynthesis; pyridoxine 5'-phosphate biosynthesis; pyridoxine 5'-phosphate from D-erythrose 4-phosphate: step 2/5. Its function is as follows. Catalyzes the oxidation of erythronate-4-phosphate to 3-hydroxy-2-oxo-4-phosphonooxybutanoate. In Shewanella baltica (strain OS195), this protein is Erythronate-4-phosphate dehydrogenase.